The primary structure comprises 854 residues: Discoidin domain-containing receptor 2 (854 aa).

Positions 1–21 are cleaved as a signal peptide; the sequence is MIPIPRMPLVLLLLLLILGSA. Residues 22-399 are Extracellular-facing; sequence KAQVNPAICR…MLKVDDSNTR (378 aa). Positions 30–185 constitute an F5/8 type C domain; it reads CRYPLGMSGG…VCMRVELYGC (156 aa). Intrachain disulfides connect Cys30–Cys185 and Cys73–Cys177. Residues Asn121, Asn213, Asn261, Asn280, and Asn372 are each glycosylated (N-linked (GlcNAc...) asparagine). Residues 400–421 form a helical membrane-spanning segment; sequence ILIGCLVAIIFILLAIIVIILW. The Cytoplasmic segment spans residues 422 to 854; sequence RQFWQKMLEK…HLLLLQQGAE (433 aa). A disordered region spans residues 452 to 471; it reads SMFNNNRSSSPSEQESNSTY. Positions 455–469 are enriched in low complexity; that stretch reads NNNRSSSPSEQESNS. Position 471 is a phosphotyrosine; by SRC and autocatalysis (Tyr471). The region spanning 563–848 is the Protein kinase domain; sequence LAFKEKLGEG…PSFQEIHLLL (286 aa). Residues 569–577 and Lys608 each bind ATP; that span reads LGEGQFGEV. Residue Asp709 is the Proton acceptor of the active site. Tyr735, Tyr739, and Tyr740 each carry phosphotyrosine; by SRC and autocatalysis.

Belongs to the protein kinase superfamily. Tyr protein kinase family. Insulin receptor subfamily. As to quaternary structure, binds hydroxyproline-rich sequence motifs in fibrillar, glycosylated collagen, such as the GQOGVMGFO motif, where O stands for hydroxyproline. Interacts with SRC. Interacts (tyrosine phosphorylated) with SHC1. N-glycosylated. In terms of processing, tyrosine phosphorylated in response to collagen binding. Phosphorylated by SRC; this is required for activation and subsequent autophosphorylation on additional tyrosine residues. Widely expressed. Detected in lung, ovary, skin and in testis Leydig cells (at protein level). Widely expressed. Detected at high levels in heart, lung, skeletal muscle, central nervous system (CNS) and kidney, and at lower levels in brain and testis. Detected in chondrocytes in tibia growth plates of young mice.

It is found in the cell membrane. It carries out the reaction L-tyrosyl-[protein] + ATP = O-phospho-L-tyrosyl-[protein] + ADP + H(+). Its activity is regulated as follows. Present in an inactive state in the absence of collagen binding and phosphorylation by SRC. Tyrosine phosphorylation enhances the affinity for ATP and the catalytic activity. Tyrosine kinase that functions as a cell surface receptor for fibrillar collagen and regulates cell differentiation, remodeling of the extracellular matrix, cell migration and cell proliferation. Required for normal bone development. Regulates osteoblast differentiation and chondrocyte maturation via a signaling pathway that involves MAP kinases and leads to the activation of the transcription factor RUNX2. Regulates remodeling of the extracellular matrix by up-regulation of the collagenases MMP1, MMP2 and MMP13, and thereby facilitates cell migration and tumor cell invasion. Promotes fibroblast migration and proliferation, and thereby contributes to cutaneous wound healing. This is Discoidin domain-containing receptor 2 (Ddr2) from Mus musculus (Mouse).